The sequence spans 465 residues: MAP kinase-interacting serine/threonine-protein kinase 2 (465 aa).

The disordered stretch occupies residues 23 to 72 (ELAFSLDQPDHGDSDFGLQCSARPDMPASQPIDIPDAKKRGKKKKRGRAT). The Nuclear localization signal signature appears at 60 to 66 (KKRGKKK). Ser-74 bears the Phosphoserine mark. The Protein kinase domain maps to 84–388 (QLQEDVLGEG…TPMVLQRNSC (305 aa)). ATP contacts are provided by residues 90 to 98 (LGEGAHARV) and Lys-113. Residue 160-162 (EKM) coordinates staurosporine. Residue Asp-205 is the Proton acceptor of the active site. Glu-209 lines the staurosporine pocket. Phosphothreonine occurs at positions 244 and 249. Positions 299, 311, and 314 each coordinate Zn(2+). Thr-379 carries the post-translational modification Phosphothreonine. Phosphoserine is present on residues Ser-437 and Ser-440. Positions 444 to 448 (LAQRR) match the MAP kinase binding motif. A Phosphoserine modification is found at Ser-452.

This sequence belongs to the protein kinase superfamily. CAMK Ser/Thr protein kinase family. In terms of assembly, monomer. Interacts with the C-terminal regions of EIF4G1 and EIF4G2; this interaction is promoted when MAPK pathways are repressed but repressed upon ERK proteins activation. Also binds to dephosphorylated MAPK3/ERK1 and MAPK1/ERK2. Isoform 1 interaction with phosphorylated MAPK3/ERK1 and MAPK1/ERK2 protects it from dephosphorylation and inactivation. Isoform 2 interacts with ESR2 and EIF4E in the nucleus. The cofactor is Mg(2+). Zn(2+) is required as a cofactor. In terms of processing, dual phosphorylation of Thr-244 and Thr-249 activates the kinase. Phosphorylation of Thr-379 activates the kinase. Phosphorylated upon arsenic trioxide As(2)O(3) treatment. Phosphorylated by MAPK1/ERK2, MAPK11 and MAPK14. Dephosphorylated by PP2A. In terms of tissue distribution, ubiquitously expressed in all tissues examined. Isoform 2 is expressed at higher levels in the ovary than is isoform 1.

The protein resides in the nucleus. It localises to the PML body. It is found in the cytoplasm. It carries out the reaction L-seryl-[protein] + ATP = O-phospho-L-seryl-[protein] + ADP + H(+). The enzyme catalyses L-threonyl-[protein] + ATP = O-phospho-L-threonyl-[protein] + ADP + H(+). Its activity is regulated as follows. Inhibited by CGP57380 and staurosporine. Activated by phosphorylation in a negative-feedback regulatory manner in response to chemotherapy (e.g. cytarabine) and thus impairs the generation of antileukemic responses. In terms of biological role, serine/threonine-protein kinase that phosphorylates SFPQ/PSF, HNRNPA1 and EIF4E. May play a role in the response to environmental stress and cytokines. Appears to regulate translation by phosphorylating EIF4E, thus increasing the affinity of this protein for the 7-methylguanosine-containing mRNA cap. Required for mediating PP2A-inhibition-induced EIF4E phosphorylation. Triggers EIF4E shuttling from cytoplasm to nucleus. Isoform 1 displays a high basal kinase activity, but isoform 2 exhibits a very low kinase activity. Acts as a mediator of the suppressive effects of IFNgamma on hematopoiesis. Negative regulator for signals that control generation of arsenic trioxide As(2)O(3)-dependent apoptosis and anti-leukemic responses. Involved in anti-apoptotic signaling in response to serum withdrawal. The protein is MAP kinase-interacting serine/threonine-protein kinase 2 (MKNK2) of Homo sapiens (Human).